The following is a 325-amino-acid chain: Hydroxylase/desaturase poxK (325 aa).

The span at 1–12 shows a compositional bias: low complexity; the sequence is MTATATPVPTVA. The interval 1–25 is disordered; sequence MTATATPVPTVASHAQDITLPPPPK.

The protein belongs to the asaB hydroxylase/desaturase family.

It functions in the pathway secondary metabolite biosynthesis. Its function is as follows. Hydroxylase/desaturase; part of the gene cluster that mediates the biosynthesis of oxaleimides, cytotoxic compounds containing an unusual disubstituted succinimide moiety. The first step of the pathway is provided by the HR-PKS poxF that serves in a new mode of collaborative biosynthesis with the PKS-NRPS poxE, by providing the olefin containing amino acid substrate via the synthesis of an ACP-bound dec-4-enoate. The cytochrome P450 monooxygenase poxM-catalyzed oxidation at the alpha-position creates the enzyme-bound 2-hydroxydec-4-enoyl-ACP thioester, which may be prone to spontaneous hydrolysis to yield 2-hydroxydec-4-enoic acid due to increased electrophilicity of the carbonyl. 2-hydroxydec-4-enoic acid can then be further oxidized by poxM to yield the alpha-ketoacid 2-oxodec-4-enoicacid, which is reductively aminated by the aminotransferase poxL to yield (S,E)-2-aminodec-4-enoic acid. The Hybrid PKS-NRPS synthetase poxE then performs condensation between the octaketide product of its PKS modules and the amino group of (S,E)-2-aminodec-4-enoic acid which is activated and incorporated by the adenylation domain. The resulting aminoacyl product can be cyclized by the Diels-Alderase PoxQ and reductively released by the reductive (R) domain of poxE to yield an aldehyde intermediate. The released aldehyde is then substrate for a Knoevenagel condensation by the hydrolyase poxO followed by an oxidation at the 5-position of the pyrrolidone ring. The presence of the olefin from the amino acid building block allows for migration of the substituted allyl group to occur. This allylic transposition reaction takes place in a conjugate addition, semipinacol-like fashion to yield a succinimide intermediate. Iterative two-electron oxidations of the C7 methyl of the succinimide intermediate to the carboxylic acid can be catalyzed by one of two remaining cytochrome P450 monooxygenasess poxC or poxD to yield oxaleimide A. Subsequent oxidation yields the maleimide scaffold oxaleimide I. Both oxaleimide A and oxaleimide I can undergo oxidative modifications in the decalin ring to yield the series of products oxaleimides B to H. The polypeptide is Hydroxylase/desaturase poxK (Penicillium oxalicum (strain 114-2 / CGMCC 5302) (Penicillium decumbens)).